Here is a 490-residue protein sequence, read N- to C-terminus: WD repeat-containing protein JIP5 (490 aa).

WD repeat units follow at residues 23-64, 70-112, 118-155, 157-196, 242-284, 286-327, and 340-377; these read KYND…ERMQ, QKKK…GSCR, PIES…ISKD, SSKD…NKFK, DQED…LMDQ, SRIK…HRVN, and GTAD…EEEE. Positions 368–490 are disordered; the sequence is SAEGDDEEEE…SHGIRRFDGL (123 aa). 2 stretches are compositionally biased toward acidic residues: residues 370 to 406 and 413 to 437; these read EGDD…EGDD and EESD…EEST. Over residues 438-448 the composition is skewed to basic and acidic residues; that stretch reads ETDHKNIEAES. Positions 450 to 461 are enriched in polar residues; that stretch reads KQANKRQASQPK. The span at 469–484 shows a compositional bias: basic residues; it reads KQKLKQTSKLAHSHGI.

This sequence belongs to the WD repeat WDR55 family.

The protein localises to the nucleus. It localises to the nucleolus. The polypeptide is WD repeat-containing protein JIP5 (JIP5) (Meyerozyma guilliermondii (strain ATCC 6260 / CBS 566 / DSM 6381 / JCM 1539 / NBRC 10279 / NRRL Y-324) (Yeast)).